The sequence spans 224 residues: Ribose-5-phosphate isomerase A (224 aa).

Residues 32–35 (TGST), 85–88 (DGAD), and 98–101 (KGGG) contribute to the substrate site. E107 acts as the Proton acceptor in catalysis. Position 125 (K125) interacts with substrate.

It belongs to the ribose 5-phosphate isomerase family. As to quaternary structure, homodimer.

It catalyses the reaction aldehydo-D-ribose 5-phosphate = D-ribulose 5-phosphate. It participates in carbohydrate degradation; pentose phosphate pathway; D-ribose 5-phosphate from D-ribulose 5-phosphate (non-oxidative stage): step 1/1. Functionally, catalyzes the reversible conversion of ribose-5-phosphate to ribulose 5-phosphate. The protein is Ribose-5-phosphate isomerase A of Pseudomonas fluorescens (strain Pf0-1).